Consider the following 787-residue polypeptide: Pyridoxal-dependent decarboxylase domain-containing protein 1 (787 aa).

Residues 29-41 (EDSQRRTEEENGK) are compositionally biased toward basic and acidic residues. Residues 29–52 (EDSQRRTEEENGKKLLSGDIPGPL) form a disordered region. Position 653 is a phosphoserine (Ser-653). The tract at residues 683 to 787 (QGSGVTPPQT…PQVEEPESLR (105 aa)) is disordered. The span at 685–697 (SGVTPPQTPTGTR) shows a compositional bias: polar residues. Phosphothreonine occurs at positions 688 and 692. A phosphoserine mark is found at Ser-711, Ser-719, and Ser-723. The segment covering 735 to 745 (QSSGGQEASEA) has biased composition (polar residues). Phosphoserine occurs at positions 747 and 785. Over residues 774-787 (QDDRPQVEEPESLR) the composition is skewed to basic and acidic residues.

This sequence belongs to the group II decarboxylase family. Pyridoxal 5'-phosphate is required as a cofactor.

The polypeptide is Pyridoxal-dependent decarboxylase domain-containing protein 1 (PDXDC1) (Bos taurus (Bovine)).